The sequence spans 256 residues: tRNA-cytidine(32) 2-sulfurtransferase (256 aa).

Residues 35–40 carry the PP-loop motif motif; the sequence is SGGKDS. Residues Cys110, Cys113, and Cys201 each contribute to the [4Fe-4S] cluster site.

Belongs to the TtcA family. In terms of assembly, homodimer. Requires Mg(2+) as cofactor. [4Fe-4S] cluster serves as cofactor.

It is found in the cytoplasm. It catalyses the reaction cytidine(32) in tRNA + S-sulfanyl-L-cysteinyl-[cysteine desulfurase] + AH2 + ATP = 2-thiocytidine(32) in tRNA + L-cysteinyl-[cysteine desulfurase] + A + AMP + diphosphate + H(+). The protein operates within tRNA modification. Functionally, catalyzes the ATP-dependent 2-thiolation of cytidine in position 32 of tRNA, to form 2-thiocytidine (s(2)C32). The sulfur atoms are provided by the cysteine/cysteine desulfurase (IscS) system. The sequence is that of tRNA-cytidine(32) 2-sulfurtransferase from Coxiella burnetii (strain RSA 493 / Nine Mile phase I).